A 310-amino-acid chain; its full sequence is Aspartate carbamoyltransferase catalytic subunit (310 aa).

Carbamoyl phosphate is bound by residues Arg-55 and Thr-56. Residue Lys-85 participates in L-aspartate binding. Residues Arg-106, His-135, and Gln-138 each coordinate carbamoyl phosphate. Arg-168 and Arg-230 together coordinate L-aspartate. 2 residues coordinate carbamoyl phosphate: Leu-268 and Pro-269.

Belongs to the aspartate/ornithine carbamoyltransferase superfamily. ATCase family. Heterododecamer (2C3:3R2) of six catalytic PyrB chains organized as two trimers (C3), and six regulatory PyrI chains organized as three dimers (R2).

The enzyme catalyses carbamoyl phosphate + L-aspartate = N-carbamoyl-L-aspartate + phosphate + H(+). It participates in pyrimidine metabolism; UMP biosynthesis via de novo pathway; (S)-dihydroorotate from bicarbonate: step 2/3. Functionally, catalyzes the condensation of carbamoyl phosphate and aspartate to form carbamoyl aspartate and inorganic phosphate, the committed step in the de novo pyrimidine nucleotide biosynthesis pathway. This Buchnera aphidicola subsp. Acyrthosiphon pisum (strain APS) (Acyrthosiphon pisum symbiotic bacterium) protein is Aspartate carbamoyltransferase catalytic subunit.